The following is a 343-amino-acid chain: Phosphoribosylformylglycinamidine cyclo-ligase (343 aa).

The protein belongs to the AIR synthase family.

Its subcellular location is the cytoplasm. It catalyses the reaction 2-formamido-N(1)-(5-O-phospho-beta-D-ribosyl)acetamidine + ATP = 5-amino-1-(5-phospho-beta-D-ribosyl)imidazole + ADP + phosphate + H(+). Its pathway is purine metabolism; IMP biosynthesis via de novo pathway; 5-amino-1-(5-phospho-D-ribosyl)imidazole from N(2)-formyl-N(1)-(5-phospho-D-ribosyl)glycinamide: step 2/2. The polypeptide is Phosphoribosylformylglycinamidine cyclo-ligase (Enterococcus faecalis (strain ATCC 700802 / V583)).